A 266-amino-acid polypeptide reads, in one-letter code: MRKNTYAMRYVAGQPAERILPPGSFASIGQALPPGEPLSTEERIRILVWNIYKQQRAEWLSVLKNYGKDAHLVLLQEAQTTPELVQFATANYLAADQVPAFVLPQHPSGVMTLSAAHPVYCCPLREREPILRLAKSALVTVYPLPDTRLLMVVNIHAVNFSLGVDVYSKQLLPIGDQIAHHSGPVIMAGDFNAWSRRRMNALYRFAREMSLRQVRFTDDQRRRAFGRPLDFVFYRGLNVSEASVLVTRASDHNPLLVEFSPGKPDK.

It belongs to the UPF0294 family.

The protein localises to the cytoplasm. The chain is UPF0294 protein YafD (yafD) from Escherichia coli O157:H7.